The chain runs to 358 residues: Protein PXR1 (358 aa).

Disordered regions lie at residues 1-26 (MGLA…NNTS) and 146-342 (EVKT…KSAT). The segment covering 11-26 (KISNDPQNTTWANNTS) has biased composition (polar residues). Residues 25–79 (TSRFGHRILTSQGWQPGDSLGASDAAHAAHYTVASQSHIRVLLKDDNLGLGAKRG) enclose the G-patch domain. Basic and acidic residues-rich tracts occupy residues 146-171 (EVKT…EDDR) and 199-217 (SMDL…SSKD). Over residues 218 to 227 (KKGKKSKKDK) the composition is skewed to basic residues. The span at 287–299 (DVEDLSSESEDES) shows a compositional bias: acidic residues. A compositionally biased stretch (polar residues) spans 300–315 (TPSASRPATGTSTPTV). Over residues 328–339 (HSVRQKWIRSKK) the composition is skewed to basic residues.

Belongs to the PINX1 family.

The protein resides in the nucleus. The protein localises to the nucleolus. Functionally, involved in rRNA-processing at A0, A1 and A2 sites and negatively regulates telomerase. The protein is Protein PXR1 (PXR1) of Phaeosphaeria nodorum (strain SN15 / ATCC MYA-4574 / FGSC 10173) (Glume blotch fungus).